Here is a 32-residue protein sequence, read N- to C-terminus: U3-theraphotoxin-Hhn1r (32 aa).

3 disulfide bridges follow: Cys2–Cys15, Cys9–Cys20, and Cys14–Cys27.

This sequence belongs to the neurotoxin 10 (Hwtx-1) family. 16 (Hntx-8) subfamily. In terms of tissue distribution, expressed by the venom gland.

Its subcellular location is the secreted. Ion channel inhibitor. The polypeptide is U3-theraphotoxin-Hhn1r (Cyriopagopus hainanus (Chinese bird spider)).